Consider the following 94-residue polypeptide: Large ribosomal subunit protein bL25 (94 aa).

This sequence belongs to the bacterial ribosomal protein bL25 family. Part of the 50S ribosomal subunit; part of the 5S rRNA/L5/L18/L25 subcomplex. Contacts the 5S rRNA. Binds to the 5S rRNA independently of L5 and L18.

In terms of biological role, this is one of the proteins that binds to the 5S RNA in the ribosome where it forms part of the central protuberance. The polypeptide is Large ribosomal subunit protein bL25 (Escherichia coli O157:H7).